A 501-amino-acid polypeptide reads, in one-letter code: Cytochrome P450 81F4 (501 aa).

A Glycyl lysine isopeptide (Lys-Gly) (interchain with G-Cter in ubiquitin) cross-link involves residue lysine 245. A helical membrane pass occupies residues 285–305; it reads IIIKGLMLGIMVASSETSALT. Cysteine 435 contacts heme.

This sequence belongs to the cytochrome P450 family. Heme serves as cofactor.

It localises to the membrane. It participates in secondary metabolite biosynthesis. Functionally, involved in indole glucosinolate biosynthesis. Catalyzes hydroxylation reactions of the glucosinolate indole ring. Converts indol-3-yl-methylglucosinolate (I3M) to 1-hydroxy-indol-3-yl-methylglucosinolate (1OH-I3M) intermediate. This hydroxy intermediates is converted to 1-methoxy-indol-3-yl-methylglucosinolate (1MO-I3M) by indole glucosinolate methyltransferase 1 and 2 (IGMT1 and IGMT2). The sequence is that of Cytochrome P450 81F4 from Arabidopsis thaliana (Mouse-ear cress).